Consider the following 101-residue polypeptide: Small ribosomal subunit protein uS14 (101 aa).

It belongs to the universal ribosomal protein uS14 family. Part of the 30S ribosomal subunit. Contacts proteins S3 and S10.

Functionally, binds 16S rRNA, required for the assembly of 30S particles and may also be responsible for determining the conformation of the 16S rRNA at the A site. In Roseobacter denitrificans (strain ATCC 33942 / OCh 114) (Erythrobacter sp. (strain OCh 114)), this protein is Small ribosomal subunit protein uS14.